We begin with the raw amino-acid sequence, 428 residues long: Adenylosuccinate synthetase (428 aa).

GTP contacts are provided by residues 12 to 18 (GDEGKGK) and 40 to 42 (GHT). The active-site Proton acceptor is the aspartate 13. 2 residues coordinate Mg(2+): aspartate 13 and glycine 40. Residues 13–16 (DEGK), 38–41 (NAGH), threonine 130, arginine 144, glutamine 225, threonine 240, and arginine 304 each bind IMP. Histidine 41 acts as the Proton donor in catalysis. 300–306 (VTTGRAR) contributes to the substrate binding site. GTP is bound by residues arginine 306, 332–334 (KID), and 414–416 (SVG).

The protein belongs to the adenylosuccinate synthetase family. As to quaternary structure, homodimer. It depends on Mg(2+) as a cofactor.

The protein localises to the cytoplasm. It catalyses the reaction IMP + L-aspartate + GTP = N(6)-(1,2-dicarboxyethyl)-AMP + GDP + phosphate + 2 H(+). Its pathway is purine metabolism; AMP biosynthesis via de novo pathway; AMP from IMP: step 1/2. Its function is as follows. Plays an important role in the de novo pathway of purine nucleotide biosynthesis. Catalyzes the first committed step in the biosynthesis of AMP from IMP. The sequence is that of Adenylosuccinate synthetase from Clostridium botulinum (strain Okra / Type B1).